The following is a 134-amino-acid chain: Transcription antitermination protein NusB (134 aa).

Belongs to the NusB family.

Its function is as follows. Involved in transcription antitermination. Required for transcription of ribosomal RNA (rRNA) genes. Binds specifically to the boxA antiterminator sequence of the ribosomal RNA (rrn) operons. This Shewanella loihica (strain ATCC BAA-1088 / PV-4) protein is Transcription antitermination protein NusB.